The primary structure comprises 537 residues: 4-coumarate--CoA ligase (537 aa).

Serine 189, serine 190, glycine 191, threonine 192, threonine 193, and lysine 197 together coordinate ATP. The (E)-4-coumaroyl-AMP site is built by tyrosine 239 and serine 243. Lysine 260 contacts CoA. Residues 262-331 (NLTTCLELIQ…ERFPKAIFGQ (70 aa)) are SBD1. The (E)-4-coumaroyl-AMP site is built by alanine 309, glutamine 331, glycine 332, threonine 336, and methionine 344. ATP-binding residues include glutamine 331, glycine 332, and threonine 336. The tract at residues 332 to 399 (GYGMTEAGPV…IRGPEIMKGY (68 aa)) is SBD2. ATP is bound by residues aspartate 420 and arginine 435. The (E)-4-coumaroyl-AMP site is built by lysine 437 and lysine 441. Lysine 443 and glycine 444 together coordinate CoA. Lysine 524 contacts ATP.

This sequence belongs to the ATP-dependent AMP-binding enzyme family. The cofactor is Mg(2+).

It carries out the reaction (E)-4-coumarate + ATP + CoA = (E)-4-coumaroyl-CoA + AMP + diphosphate. The enzyme catalyses (E)-4-coumarate + ATP + H(+) = (E)-4-coumaroyl-AMP + diphosphate. It catalyses the reaction (E)-4-coumaroyl-AMP + CoA = (E)-4-coumaroyl-CoA + AMP + H(+). The protein operates within phytoalexin biosynthesis; 3,4',5-trihydroxystilbene biosynthesis; 3,4',5-trihydroxystilbene from trans-4-coumarate: step 1/2. Its function is as follows. Carboxylate--CoA ligase that may use 4-coumarate as substrate. Follows a two-step reaction mechanism, wherein the carboxylate substrate first undergoes adenylation by ATP, followed by a thioesterification in the presence of CoA to yield the final CoA thioester. The chain is 4-coumarate--CoA ligase (4CL) from Pinus taeda (Loblolly pine).